A 142-amino-acid chain; its full sequence is Hemoglobin subunit epsilon (142 aa).

The Globin domain occupies 3–142 (HFTAEEKAAI…KLVSAVAIAL (140 aa)). Phosphoserine is present on residues Ser-14 and Ser-51. The heme b site is built by His-64 and His-93.

It belongs to the globin family. In terms of assembly, heterotetramer of two alpha chains and two epsilon chains in early embryonic hemoglobin Gower-2; two zeta chains and two epsilon chains in early embryonic hemoglobin Gower-1. As to expression, red blood cells.

In terms of biological role, the epsilon chain is a beta-type chain of early mammalian embryonic hemoglobin. This chain is Hemoglobin subunit epsilon (HBE1), found in Callithrix geoffroyi (Geoffroy's marmoset).